Consider the following 330-residue polypeptide: Cathepsin S (330 aa).

An N-terminal signal peptide occupies residues 1 to 17 (MAVLGAPGVLCDNGATA). The propeptide at 18–112 (ERPTLDHHWD…GTLKSSSNQT (95 aa)) is activation peptide. 2 N-linked (GlcNAc...) asparagine glycosylation sites follow: N100 and N110. Intrachain disulfides connect C124/C222, C134/C179, C168/C211, and C271/C319. C137 is a catalytic residue. Active-site residues include H277 and N297.

This sequence belongs to the peptidase C1 family. Monomer. Highest levels occur in the ileum followed by spleen, brain, thyroid, ovary and uterus. Low levels are found in the liver, kidney, jejunum and lung with lowest levels in the heart.

It is found in the lysosome. Its subcellular location is the secreted. The protein resides in the cytoplasmic vesicle. The protein localises to the phagosome. It carries out the reaction Similar to cathepsin L, but with much less activity on Z-Phe-Arg-|-NHMec, and more activity on the Z-Val-Val-Arg-|-Xaa compound.. Thiol protease. Key protease responsible for the removal of the invariant chain from MHC class II molecules and MHC class II antigen presentation. The bond-specificity of this proteinase is in part similar to the specificities of cathepsin L. In Rattus norvegicus (Rat), this protein is Cathepsin S (Ctss).